The following is a 162-amino-acid chain: Cyclic pyranopterin monophosphate synthase (162 aa).

Substrate-binding positions include 75 to 77 (LCH) and 113 to 114 (ME). The active site involves aspartate 128.

This sequence belongs to the MoaC family. As to quaternary structure, homohexamer; trimer of dimers.

The catalysed reaction is (8S)-3',8-cyclo-7,8-dihydroguanosine 5'-triphosphate = cyclic pyranopterin phosphate + diphosphate. It functions in the pathway cofactor biosynthesis; molybdopterin biosynthesis. Functionally, catalyzes the conversion of (8S)-3',8-cyclo-7,8-dihydroguanosine 5'-triphosphate to cyclic pyranopterin monophosphate (cPMP). The chain is Cyclic pyranopterin monophosphate synthase from Xanthobacter autotrophicus (strain ATCC BAA-1158 / Py2).